The following is a 242-amino-acid chain: Phosphoribosylaminoimidazole-succinocarboxamide synthase (242 aa).

The protein belongs to the SAICAR synthetase family.

It carries out the reaction 5-amino-1-(5-phospho-D-ribosyl)imidazole-4-carboxylate + L-aspartate + ATP = (2S)-2-[5-amino-1-(5-phospho-beta-D-ribosyl)imidazole-4-carboxamido]succinate + ADP + phosphate + 2 H(+). It participates in purine metabolism; IMP biosynthesis via de novo pathway; 5-amino-1-(5-phospho-D-ribosyl)imidazole-4-carboxamide from 5-amino-1-(5-phospho-D-ribosyl)imidazole-4-carboxylate: step 1/2. This Trichodesmium erythraeum (strain IMS101) protein is Phosphoribosylaminoimidazole-succinocarboxamide synthase.